The following is a 146-amino-acid chain: ATP synthase F(0) complex subunit C2, mitochondrial (146 aa).

Residues 1 to 71 (MYACSKFVST…RSFQTSAISR (71 aa)) constitute a mitochondrion transit peptide. A helical membrane pass occupies residues 87-107 (VGVAGSGAGIGTVFGSLIIGY). Position 114 is an N6,N6,N6-trimethyllysine (K114). Residues 122 to 142 (ILGFALSEAMGLFCLMVAFLI) form a helical membrane-spanning segment.

It belongs to the ATPase C chain family. F-type ATPases have 2 components, CF(1) - the catalytic core - and CF(0) - the membrane proton channel. CF(1) has five subunits: alpha(3), beta(3), gamma(1), delta(1), epsilon(1). CF(0) has three main subunits: a, b and c. Interacts with DNAJC30; interaction is direct. In terms of processing, trimethylated by ATPSCKMT at Lys-114. Methylation is required for proper incorporation of the C subunit into the ATP synthase complex and mitochondrial respiration.

The protein localises to the mitochondrion membrane. In terms of biological role, mitochondrial membrane ATP synthase (F(1)F(0) ATP synthase or Complex V) produces ATP from ADP in the presence of a proton gradient across the membrane which is generated by electron transport complexes of the respiratory chain. F-type ATPases consist of two structural domains, F(1) - containing the extramembraneous catalytic core and F(0) - containing the membrane proton channel, linked together by a central stalk and a peripheral stalk. During catalysis, ATP synthesis in the catalytic domain of F(1) is coupled via a rotary mechanism of the central stalk subunits to proton translocation. Part of the complex F(0) domain. A homomeric c-ring of probably 10 subunits is part of the complex rotary element. The polypeptide is ATP synthase F(0) complex subunit C2, mitochondrial (Mus musculus (Mouse)).